Here is a 65-residue protein sequence, read N- to C-terminus: Period circadian protein (65 aa).

A disordered region spans residues 1 to 65 (EGSGGSGSSG…VTLTESLLNK (65 aa)). Over residues 18–28 (VRMSSVTNTSN) the composition is skewed to polar residues. The segment covering 29-38 (AGTGTSAGDN) has biased composition (low complexity). The segment covering 56–65 (VTLTESLLNK) has biased composition (polar residues).

In terms of assembly, forms a heterodimer with timeless (TIM); the complex then translocates into the nucleus. In terms of processing, phosphorylated with a circadian rhythmicity, probably by the double-time protein (dbt). Phosphorylation could be implicated in the stability of per monomer and in the formation of heterodimer per-tim.

It is found in the nucleus. It localises to the cytoplasm. The protein resides in the perinuclear region. In terms of biological role, essential for biological clock functions. Determines the period length of circadian and ultradian rhythms; an increase in PER dosage leads to shortened circadian rhythms and a decrease leads to lengthened circadian rhythms. Essential for the circadian rhythmicity of locomotor activity, eclosion behavior, and for the rhythmic component of the male courtship song that originates in the thoracic nervous system. The biological cycle depends on the rhythmic formation and nuclear localization of the TIM-PER complex. Light induces the degradation of TIM, which promotes elimination of PER. Nuclear activity of the heterodimer coordinatively regulates PER and TIM transcription through a negative feedback loop. Behaves as a negative element in circadian transcriptional loop. Does not appear to bind DNA, suggesting indirect transcriptional inhibition. The protein is Period circadian protein (per) of Drosophila mojavensis (Fruit fly).